We begin with the raw amino-acid sequence, 492 residues long: GTPase Obg (492 aa).

An Obg domain is found at 2-159 (PRFVDRVVIH…RELTLELKTV (158 aa)). The OBG-type G domain maps to 160–340 (ADVGLIGFPS…LIFGLWQMIS (181 aa)). GTP-binding positions include 166-173 (GFPSAGKS), 191-195 (FTTLV), 212-215 (DVPG), 292-295 (NKID), and 321-323 (STV). The Mg(2+) site is built by Ser173 and Thr193. Residues 358 to 438 (PVPVDDSGFR…IGDMTFDWEP (81 aa)) enclose the OCT domain. Residues 449-492 (SGRGTDARLERTERVGAAERKAARRQRRTGDDAERGTTERGENT) are disordered. 2 stretches are compositionally biased toward basic and acidic residues: residues 453-469 (TDAR…AERK) and 476-492 (RTGD…GENT).

Belongs to the TRAFAC class OBG-HflX-like GTPase superfamily. OBG GTPase family. As to quaternary structure, monomer. Mg(2+) serves as cofactor.

The protein localises to the cytoplasm. In terms of biological role, an essential GTPase which binds GTP, GDP and possibly (p)ppGpp with moderate affinity, with high nucleotide exchange rates and a fairly low GTP hydrolysis rate. Plays a role in control of the cell cycle, stress response, ribosome biogenesis and in those bacteria that undergo differentiation, in morphogenesis control. The protein is GTPase Obg of Mycobacterium avium (strain 104).